The following is a 275-amino-acid chain: 1-deoxy-11-beta-hydroxypentalenate dehydrogenase (275 aa).

An NAD(+)-binding site is contributed by 12 to 36 (GAASGIGLALSARFARAGAGVVMAD). Residue Ser144 participates in substrate binding. The active-site Proton acceptor is the Tyr157. Position 161 (Lys161) interacts with NAD(+).

Belongs to the short-chain dehydrogenases/reductases (SDR) family.

The enzyme catalyses 1-deoxy-11beta-hydroxypentalenate + NAD(+) = 1-deoxy-11-oxopentalenate + NADH + H(+). The protein operates within antibiotic biosynthesis; pentalenolactone biosynthesis. In terms of biological role, catalyzes the oxidation of 1-deoxy-11-beta-hydroxypentalenic acid to 1-deoxy-11-oxopentalenic acid in the biosynthesis of pentalenolactone antibiotic. The polypeptide is 1-deoxy-11-beta-hydroxypentalenate dehydrogenase (penF) (Streptomyces exfoliatus (Streptomyces hydrogenans)).